The chain runs to 403 residues: Chalcone synthase 3 (403 aa).

C170 is a catalytic residue.

This sequence belongs to the thiolase-like superfamily. Chalcone/stilbene synthases family.

It catalyses the reaction (E)-4-coumaroyl-CoA + 3 malonyl-CoA + 3 H(+) = 2',4,4',6'-tetrahydroxychalcone + 3 CO2 + 4 CoA. Its pathway is secondary metabolite biosynthesis; flavonoid biosynthesis. Its function is as follows. The primary product of this enzyme is 4,2',4',6'-tetrahydroxychalcone (also termed naringenin-chalcone or chalcone) which can under specific conditions spontaneously isomerize into naringenin. The protein is Chalcone synthase 3 (CHS3) of Gerbera hybrida (Daisy).